A 128-amino-acid polypeptide reads, in one-letter code: Large ribosomal subunit protein bL21 (128 aa).

The disordered stretch occupies residues 104–128; that stretch reads GKSPSVGPRPKRVKAEPAPAADAAE. The segment covering 119 to 128 has biased composition (low complexity); it reads EPAPAADAAE.

The protein belongs to the bacterial ribosomal protein bL21 family. In terms of assembly, part of the 50S ribosomal subunit. Contacts protein L20.

Its function is as follows. This protein binds to 23S rRNA in the presence of protein L20. The polypeptide is Large ribosomal subunit protein bL21 (Rhodopseudomonas palustris (strain HaA2)).